The chain runs to 105 residues: Large ribosomal subunit protein P2 (105 aa).

The tract at residues 84 to 105 is disordered; it reads AEAKKEEPEEEADDDMGFGLFD.

It belongs to the eukaryotic ribosomal protein P1/P2 family. P1 and P2 exist as dimers at the large ribosomal subunit. Phosphorylated.

Plays an important role in the elongation step of protein synthesis. The sequence is that of Large ribosomal subunit protein P2 (ARP-1) from Leishmania donovani.